We begin with the raw amino-acid sequence, 339 residues long: Heat-inducible transcription repressor HrcA (339 aa).

This sequence belongs to the HrcA family.

Its function is as follows. Negative regulator of class I heat shock genes (grpE-dnaK-dnaJ and groELS operons). Prevents heat-shock induction of these operons. This chain is Heat-inducible transcription repressor HrcA, found in Clostridium perfringens (strain ATCC 13124 / DSM 756 / JCM 1290 / NCIMB 6125 / NCTC 8237 / Type A).